A 402-amino-acid polypeptide reads, in one-letter code: Mediator of RNA polymerase II transcription subunit 27 (402 aa).

Positions 1 to 23 (MQTLHQSQLLQNPAEAANNQSES) are enriched in polar residues. Positions 1–30 (MQTLHQSQLLQNPAEAANNQSESDAPPKQV) are disordered. The stretch at 28–49 (KQVAQAMERLNQAARVIADIRL) forms a coiled coil.

Belongs to the Mediator complex subunit 27 family. As to quaternary structure, component of the Mediator complex.

The protein resides in the nucleus. In terms of biological role, component of the Mediator complex, a coactivator involved in the regulated transcription of nearly all RNA polymerase II-dependent genes. Mediator functions as a bridge to convey information from gene-specific regulatory proteins to the basal RNA polymerase II transcription machinery. The Mediator complex, having a compact conformation in its free form, is recruited to promoters by direct interactions with regulatory proteins and serves for the assembly of a functional preinitiation complex with RNA polymerase II and the general transcription factors. In Arabidopsis thaliana (Mouse-ear cress), this protein is Mediator of RNA polymerase II transcription subunit 27 (MED27).